The primary structure comprises 340 residues: Phenylalanine--tRNA ligase alpha subunit (340 aa).

E254 serves as a coordination point for Mg(2+).

The protein belongs to the class-II aminoacyl-tRNA synthetase family. Phe-tRNA synthetase alpha subunit type 1 subfamily. As to quaternary structure, tetramer of two alpha and two beta subunits. Mg(2+) serves as cofactor.

The protein resides in the cytoplasm. It catalyses the reaction tRNA(Phe) + L-phenylalanine + ATP = L-phenylalanyl-tRNA(Phe) + AMP + diphosphate + H(+). The polypeptide is Phenylalanine--tRNA ligase alpha subunit (Chloroherpeton thalassium (strain ATCC 35110 / GB-78)).